Reading from the N-terminus, the 187-residue chain is Photosystem I assembly protein Ycf4 (187 aa).

The next 2 membrane-spanning stretches (helical) occupy residues 21–43 (LSNY…AGIS) and 69–91 (LLYG…WNVG).

It belongs to the Ycf4 family.

The protein resides in the plastid. The protein localises to the cyanelle thylakoid membrane. Functionally, seems to be required for the assembly of the photosystem I complex. The polypeptide is Photosystem I assembly protein Ycf4 (Cyanophora paradoxa).